Consider the following 168-residue polypeptide: Transmembrane protein 229b (168 aa).

Residues 1 to 14 (MAPPEPLTALSRWY) lie on the Cytoplasmic side of the membrane. A helical membrane pass occupies residues 15–35 (LYAIHGYFCEVMFTAAWDFVV). Residues 36–40 (NYNWK) are Extracellular-facing. The chain crosses the membrane as a helical span at residues 41 to 61 (FPGVTSVWALFIYGTSILIVE). Residues 62–72 (KMYLYLKDKCN) lie on the Cytoplasmic side of the membrane. A helical transmembrane segment spans residues 73 to 93 (ILIRCLIYTLWTYIWEFSTGL). Over 94 to 109 (ILRQFNACPWDYSQFD) the chain is Extracellular. The chain crosses the membrane as a helical span at residues 110-130 (FDFMGLITLEYAIPWFCASFI). Residues 131–168 (MEQLVIRNTLRLRFDEHAEPGSPVMSTVSMANGHVKCN) lie on the Cytoplasmic side of the membrane.

The protein belongs to the TMEM229 family.

The protein localises to the membrane. The chain is Transmembrane protein 229b (tmem229b) from Xenopus tropicalis (Western clawed frog).